The chain runs to 458 residues: Argininosuccinate lyase (458 aa).

It belongs to the lyase 1 family. Argininosuccinate lyase subfamily.

It localises to the cytoplasm. The catalysed reaction is 2-(N(omega)-L-arginino)succinate = fumarate + L-arginine. Its pathway is amino-acid biosynthesis; L-arginine biosynthesis; L-arginine from L-ornithine and carbamoyl phosphate: step 3/3. The polypeptide is Argininosuccinate lyase (Geotalea daltonii (strain DSM 22248 / JCM 15807 / FRC-32) (Geobacter daltonii)).